Consider the following 299-residue polypeptide: GTPase Era (299 aa).

One can recognise an Era-type G domain in the interval 8 to 176 (RCGYVAIVGR…EKLVGERLPE (169 aa)). The G1 stretch occupies residues 16–23 (GRPNVGKS). 16-23 (GRPNVGKS) provides a ligand contact to GTP. Residues 42–46 (QTTRH) form a G2 region. A G3 region spans residues 63-66 (DTPG). GTP is bound by residues 63–67 (DTPGL) and 125–128 (NKAD). Positions 125-128 (NKAD) are G4. Positions 155–157 (ISA) are G5. The KH type-2 domain maps to 199–283 (IREKIMRQLG…MLNLWVKVKG (85 aa)).

It belongs to the TRAFAC class TrmE-Era-EngA-EngB-Septin-like GTPase superfamily. Era GTPase family. Monomer.

The protein localises to the cytoplasm. It localises to the cell inner membrane. Its function is as follows. An essential GTPase that binds both GDP and GTP, with rapid nucleotide exchange. Plays a role in 16S rRNA processing and 30S ribosomal subunit biogenesis and possibly also in cell cycle regulation and energy metabolism. The sequence is that of GTPase Era from Ectopseudomonas mendocina (strain ymp) (Pseudomonas mendocina).